Consider the following 224-residue polypeptide: Charged multivesicular body protein 4c (224 aa).

2 disordered regions span residues 1–21 (MSVF…PTPQ) and 182–224 (SGPE…AWAM). The span at 7-17 (LFGGGGKGGKG) shows a compositional bias: gly residues. The stretch at 21 to 221 (QEAIQKLRET…DEDDMEELKA (201 aa)) forms a coiled coil.

Belongs to the SNF7 family. As to quaternary structure, probable core component of the endosomal sorting required for transport complex III (ESCRT-III). ESCRT-III components are thought to multimerize to form a flat lattice on the perimeter membrane of the endosome.

It is found in the cytoplasm. Its subcellular location is the cytosol. It localises to the late endosome membrane. In terms of biological role, probable core component of the endosomal sorting required for transport complex III (ESCRT-III) which is involved in multivesicular bodies (MVBs) formation and sorting of endosomal cargo proteins into MVBs. MVBs contain intraluminal vesicles (ILVs) that are generated by invagination and scission from the limiting membrane of the endosome and mostly are delivered to lysosomes enabling degradation of membrane proteins, such as stimulated growth factor receptors, lysosomal enzymes and lipids. Key component of the cytokinesis checkpoint, a process required to delay abscission to prevent both premature resolution of intercellular chromosome bridges and accumulation of DNA damage. The sequence is that of Charged multivesicular body protein 4c (chmp4c) from Danio rerio (Zebrafish).